The following is a 266-amino-acid chain: 3-methyl-2-oxobutanoate hydroxymethyltransferase (266 aa).

Residues D45 and D84 each contribute to the Mg(2+) site. 3-methyl-2-oxobutanoate is bound by residues 45-46 (DS), D84, and K112. E114 is a binding site for Mg(2+). E181 serves as the catalytic Proton acceptor.

This sequence belongs to the PanB family. In terms of assembly, homodecamer; pentamer of dimers. It depends on Mg(2+) as a cofactor.

The protein localises to the cytoplasm. It catalyses the reaction 3-methyl-2-oxobutanoate + (6R)-5,10-methylene-5,6,7,8-tetrahydrofolate + H2O = 2-dehydropantoate + (6S)-5,6,7,8-tetrahydrofolate. The protein operates within cofactor biosynthesis; (R)-pantothenate biosynthesis; (R)-pantoate from 3-methyl-2-oxobutanoate: step 1/2. Catalyzes the reversible reaction in which hydroxymethyl group from 5,10-methylenetetrahydrofolate is transferred onto alpha-ketoisovalerate to form ketopantoate. This chain is 3-methyl-2-oxobutanoate hydroxymethyltransferase, found in Pseudomonas savastanoi pv. phaseolicola (strain 1448A / Race 6) (Pseudomonas syringae pv. phaseolicola (strain 1448A / Race 6)).